The following is a 90-amino-acid chain: Large ribosomal subunit protein bL27 (90 aa).

Residues 1 to 22 form a disordered region; the sequence is MAHKKAGGSTRNGRDSNPKMLG.

The protein belongs to the bacterial ribosomal protein bL27 family.

This is Large ribosomal subunit protein bL27 from Coxiella burnetii (strain Dugway 5J108-111).